Here is a 490-residue protein sequence, read N- to C-terminus: Histone-lysine N-methyltransferase Smyd1 (490 aa).

The region spanning 7–253 (ENVEVFTSEG…EGEELTVSYI (247 aa)) is the SET domain. Position 17-19 (17-19 (KGR)) interacts with S-adenosyl-L-methionine. Zn(2+)-binding residues include cysteine 52, cysteine 55, cysteine 65, cysteine 68, cysteine 74, cysteine 78, histidine 86, and cysteine 90. Residues 52-90 (CHTCFKRQEKLHRCGQCKFAHYCDRTCQKDAWLNHKNEC) form an MYND-type zinc finger. S-adenosyl-L-methionine-binding positions include histidine 135 and 205–206 (NH). Cysteine 208 lines the Zn(2+) pocket. 270-272 (YYF) is an S-adenosyl-L-methionine binding site. Cysteine 274, cysteine 276, and cysteine 279 together coordinate Zn(2+).

Belongs to the class V-like SAM-binding methyltransferase superfamily. Interacts with HDAC1, HDAC2 and HDAC3. Interacts (via MYND-type zinc finger) with NACA isoform skNAC. As to expression, expressed in cardiac and skeletal muscle, lymphocytes and thymus.

It is found in the cytoplasm. The protein resides in the nucleus. It catalyses the reaction L-lysyl(4)-[histone H3] + 3 S-adenosyl-L-methionine = N(6),N(6),N(6)-trimethyl-L-lysyl(4)-[histone H3] + 3 S-adenosyl-L-homocysteine + 3 H(+). Methylates histone H3 at 'Lys-4' (H3K4me). Acts as a transcriptional repressor. Essential for cardiomyocyte differentiation and cardiac morphogenesis. This chain is Histone-lysine N-methyltransferase Smyd1 (Smyd1), found in Mus musculus (Mouse).